The following is a 469-amino-acid chain: Ribulose bisphosphate carboxylase large chain (469 aa).

The residue at position 5 (lysine 5) is an N6,N6,N6-trimethyllysine. 2 residues coordinate substrate: asparagine 114 and threonine 164. Residue lysine 166 is the Proton acceptor of the active site. Lysine 168 contributes to the substrate binding site. Mg(2+) contacts are provided by lysine 192, aspartate 194, and glutamate 195. Lysine 192 carries the N6-carboxylysine modification. The active-site Proton acceptor is histidine 285. Substrate is bound by residues arginine 286, histidine 318, and serine 370.

The protein belongs to the RuBisCO large chain family. Type I subfamily. Heterohexadecamer of 8 large chains and 8 small chains; disulfide-linked. The disulfide link is formed within the large subunit homodimers. Mg(2+) is required as a cofactor. Post-translationally, the disulfide bond which can form in the large chain dimeric partners within the hexadecamer appears to be associated with oxidative stress and protein turnover.

It localises to the plastid. It is found in the chloroplast. It catalyses the reaction 2 (2R)-3-phosphoglycerate + 2 H(+) = D-ribulose 1,5-bisphosphate + CO2 + H2O. It carries out the reaction D-ribulose 1,5-bisphosphate + O2 = 2-phosphoglycolate + (2R)-3-phosphoglycerate + 2 H(+). Its function is as follows. RuBisCO catalyzes two reactions: the carboxylation of D-ribulose 1,5-bisphosphate, the primary event in carbon dioxide fixation, as well as the oxidative fragmentation of the pentose substrate in the photorespiration process. Both reactions occur simultaneously and in competition at the same active site. This Nicandra physalodes (Apple-of-Peru) protein is Ribulose bisphosphate carboxylase large chain.